The primary structure comprises 136 residues: uncharacterized protein (136 aa).

The helical transmembrane segment at leucine 19–phenylalanine 39 threads the bilayer. Disordered regions lie at residues serine 54 to proline 87 and lysine 112 to tyrosine 136.

Its subcellular location is the membrane. This is an uncharacterized protein from Arabidopsis thaliana (Mouse-ear cress).